Consider the following 195-residue polypeptide: A-type ATP synthase subunit E (195 aa).

Belongs to the V-ATPase E subunit family. In terms of assembly, has multiple subunits with at least A(3), B(3), C, D, E, F, H, I and proteolipid K(x).

It is found in the cell membrane. Its function is as follows. Component of the A-type ATP synthase that produces ATP from ADP in the presence of a proton gradient across the membrane. This is A-type ATP synthase subunit E from Halobacterium salinarum (strain ATCC 29341 / DSM 671 / R1).